The following is a 513-amino-acid chain: Xylose import ATP-binding protein XylG (513 aa).

ABC transporter domains lie at 5 to 242 and 259 to 505; these read LEMK…VGRE and LRVE…LRSE. 37–44 is an ATP binding site; sequence GENGSGKS.

It belongs to the ABC transporter superfamily. Xylose importer (TC 3.A.1.2.4) family. The complex is composed of two ATP-binding proteins (XylG), two transmembrane proteins (XylH) and a solute-binding protein (XylF).

It is found in the cell inner membrane. It catalyses the reaction D-xylose(out) + ATP + H2O = D-xylose(in) + ADP + phosphate + H(+). Part of the ABC transporter complex XylFGH involved in xylose import. Responsible for energy coupling to the transport system. The protein is Xylose import ATP-binding protein XylG of Pectobacterium atrosepticum (strain SCRI 1043 / ATCC BAA-672) (Erwinia carotovora subsp. atroseptica).